The primary structure comprises 387 residues: Pepsin A (387 aa).

Positions 1 to 16 (MKKLLLLLGLVALSEC) are cleaved as a signal peptide. A propeptide spans 17–61 (LYKVPLVKKKSLRQNLIENGLLKDFLAKHNVNPASKYFPTEAATE) (activation peptide). The 310-residue stretch at 75–384 (YFGTIGIGTP…DRGNNRVGLA (310 aa)) folds into the Peptidase A1 domain. Residue D93 is part of the active site. C106 and C111 are joined by a disulfide. Phosphoserine is present on S129. A disulfide bond links C267 and C271. D276 is an active-site residue. A disulfide bridge connects residues C310 and C343.

Belongs to the peptidase A1 family.

It localises to the secreted. It catalyses the reaction Preferential cleavage: hydrophobic, preferably aromatic, residues in P1 and P1' positions. Cleaves 1-Phe-|-Val-2, 4-Gln-|-His-5, 13-Glu-|-Ala-14, 14-Ala-|-Leu-15, 15-Leu-|-Tyr-16, 16-Tyr-|-Leu-17, 23-Gly-|-Phe-24, 24-Phe-|-Phe-25 and 25-Phe-|-Tyr-26 bonds in the B chain of insulin.. Its function is as follows. Shows particularly broad specificity; although bonds involving phenylalanine and leucine are preferred, many others are also cleaved to some extent. This chain is Pepsin A (PGA), found in Suncus murinus (Asian house shrew).